A 702-amino-acid polypeptide reads, in one-letter code: Ribosomal RNA large subunit methyltransferase K/L (702 aa).

Residues 43 to 154 enclose the THUMP domain; that stretch reads LIYQSLMWSR…KETASIALDL (112 aa).

Belongs to the methyltransferase superfamily. RlmKL family.

Its subcellular location is the cytoplasm. It catalyses the reaction guanosine(2445) in 23S rRNA + S-adenosyl-L-methionine = N(2)-methylguanosine(2445) in 23S rRNA + S-adenosyl-L-homocysteine + H(+). The catalysed reaction is guanosine(2069) in 23S rRNA + S-adenosyl-L-methionine = N(2)-methylguanosine(2069) in 23S rRNA + S-adenosyl-L-homocysteine + H(+). Its function is as follows. Specifically methylates the guanine in position 2445 (m2G2445) and the guanine in position 2069 (m7G2069) of 23S rRNA. This chain is Ribosomal RNA large subunit methyltransferase K/L, found in Salmonella schwarzengrund (strain CVM19633).